The sequence spans 207 residues: Large ribosomal subunit protein uL4 (207 aa).

The interval 44–77 (LRQGTHKTKGRSEVRGGGRKPWRQKGTGRARQGS) is disordered. Over residues 60-71 (GGRKPWRQKGTG) the composition is skewed to basic residues.

It belongs to the universal ribosomal protein uL4 family. Part of the 50S ribosomal subunit.

Functionally, one of the primary rRNA binding proteins, this protein initially binds near the 5'-end of the 23S rRNA. It is important during the early stages of 50S assembly. It makes multiple contacts with different domains of the 23S rRNA in the assembled 50S subunit and ribosome. Its function is as follows. Forms part of the polypeptide exit tunnel. In Shouchella clausii (strain KSM-K16) (Alkalihalobacillus clausii), this protein is Large ribosomal subunit protein uL4.